The primary structure comprises 522 residues: Coiled-coil domain-containing protein 149-B (522 aa).

Coiled coils occupy residues 1–196 and 260–287; these read MANQ…LESK and IRHQ…LEVS. Residues 413-522 form a disordered region; sequence ACTAERSEQH…TSPHQECPSS (110 aa). Polar residues-rich tracts occupy residues 429–438, 467–490, and 503–522; these read GGHQSMSTEA, QPVT…TAEQ, and ASLN…CPSS.

This sequence belongs to the CCDC149 family.

The chain is Coiled-coil domain-containing protein 149-B (ccdc149b) from Danio rerio (Zebrafish).